A 328-amino-acid polypeptide reads, in one-letter code: Cytosolic Fe-S cluster assembly factor NBP35 (328 aa).

4 residues coordinate [4Fe-4S] cluster: C27, C41, C44, and C50. An ATP-binding site is contributed by 80–87; sequence GKGGVGKS. [4Fe-4S] cluster-binding residues include C253 and C256.

It belongs to the Mrp/NBP35 ATP-binding proteins family. NUBP1/NBP35 subfamily. In terms of assembly, heterotetramer of 2 NBP35 and 2 CFD1 chains. [4Fe-4S] cluster is required as a cofactor.

It is found in the cytoplasm. It localises to the nucleus. Its function is as follows. Component of the cytosolic iron-sulfur (Fe/S) protein assembly (CIA) machinery. Required for maturation of extramitochondrial Fe-S proteins. The NBP35-CFD1 heterotetramer forms a Fe-S scaffold complex, mediating the de novo assembly of an Fe-S cluster and its transfer to target apoproteins. Required for biogenesis and export of both ribosomal subunits, which may reflect a role in assembly of the Fe/S clusters in RLI1, a protein which performs rRNA processing and ribosome export. The polypeptide is Cytosolic Fe-S cluster assembly factor NBP35 (Saccharomyces cerevisiae (strain ATCC 204508 / S288c) (Baker's yeast)).